Here is a 228-residue protein sequence, read N- to C-terminus: Protein ARV 2 (228 aa).

A run of 2 helical transmembrane segments spans residues 37 to 57 (EVAD…LILH) and 80 to 100 (LLWK…LLLR). N-linked (GlcNAc...) asparagine glycosylation is present at asparagine 107. Helical transmembrane passes span 123–143 (VLSA…LMLV), 150–170 (ILLT…MPVW), and 176–196 (VIFI…KVMT).

This sequence belongs to the ARV1 family. Restricted to tissues in which cells are actively dividing or expanding. Mostly expressed in roots and flowers, and, to a lower extent, in stems and leaves.

Its subcellular location is the endoplasmic reticulum membrane. Its function is as follows. Mediator of sterol homeostasis involved in sterol uptake, trafficking and distribution into membranes. Also regulates the sphingolipid metabolism. The polypeptide is Protein ARV 2 (Arabidopsis thaliana (Mouse-ear cress)).